We begin with the raw amino-acid sequence, 156 residues long: Small ribosomal subunit protein uS7 (156 aa).

It belongs to the universal ribosomal protein uS7 family. Part of the 30S ribosomal subunit. Contacts proteins S9 and S11.

One of the primary rRNA binding proteins, it binds directly to 16S rRNA where it nucleates assembly of the head domain of the 30S subunit. Is located at the subunit interface close to the decoding center, probably blocks exit of the E-site tRNA. In Jannaschia sp. (strain CCS1), this protein is Small ribosomal subunit protein uS7.